The chain runs to 420 residues: Tryptophan synthase beta chain (420 aa).

At Lys100 the chain carries N6-(pyridoxal phosphate)lysine.

Belongs to the TrpB family. In terms of assembly, tetramer of two alpha and two beta chains. Pyridoxal 5'-phosphate serves as cofactor.

The catalysed reaction is (1S,2R)-1-C-(indol-3-yl)glycerol 3-phosphate + L-serine = D-glyceraldehyde 3-phosphate + L-tryptophan + H2O. The protein operates within amino-acid biosynthesis; L-tryptophan biosynthesis; L-tryptophan from chorismate: step 5/5. Its function is as follows. The beta subunit is responsible for the synthesis of L-tryptophan from indole and L-serine. This Pyrobaculum islandicum (strain DSM 4184 / JCM 9189 / GEO3) protein is Tryptophan synthase beta chain.